A 279-amino-acid chain; its full sequence is Dehydrogenase/reductase SDR family member 4 (279 aa).

37-61 (LVTASTDGIGFAIARRLAEDGAHVV) provides a ligand contact to NADP(+). Lysine 93 carries the post-translational modification N6-acetyllysine; alternate. Residue lysine 93 is modified to N6-succinyllysine; alternate. An N6-acetyllysine modification is found at lysine 106. Serine 170 lines the substrate pocket. The Proton acceptor role is filled by tyrosine 183. Lysine 187 provides a ligand contact to NADP(+). Lysine 217 carries the post-translational modification N6-acetyllysine; alternate. Residue lysine 217 is modified to N6-succinyllysine; alternate. Phosphoserine is present on serine 221. N6-succinyllysine occurs at positions 228 and 235. The Peroxisomal targeting signal motif lies at 277–279 (SRL).

This sequence belongs to the short-chain dehydrogenases/reductases (SDR) family. In terms of assembly, homotetramer.

The protein resides in the peroxisome. The enzyme catalyses a secondary alcohol + NADP(+) = a ketone + NADPH + H(+). It catalyses the reaction 3alpha-hydroxy-5beta-pregnan-20-one + NADP(+) = 5beta-pregnan-3,20-dione + NADPH + H(+). The catalysed reaction is 5beta-dihydrotestosterone + NADPH + H(+) = 5beta-androstane-3alpha,17beta-diol + NADP(+). It carries out the reaction all-trans-retinol + NADP(+) = all-trans-retinal + NADPH + H(+). The enzyme catalyses isatin + NADPH + H(+) = 3-hydroxyindolin-2-one + NADP(+). Its function is as follows. NADPH-dependent oxidoreductase which catalyzes the reduction of a variety of compounds bearing carbonyl groups including ketosteroids, alpha-dicarbonyl compounds, aldehydes, aromatic ketones and quinones. Reduces all-trans-retinal and 9-cis retinal. Reduces 3-ketosteroids and benzil into 3alpha-hydroxysteroids and S-benzoin, respectively, in contrast to the stereoselectivity of primates DHRS4s which produce 3beta-hydroxysteroids and R-benzoin. In the reverse reaction, catalyzes the NADP-dependent oxidation of 3alpha-hydroxysteroids and alcohol, but with much lower efficiency. Involved in the metabolism of 3alpha-hydroxysteroids, retinoid, isatin and xenobiotic carbonyl compounds. The chain is Dehydrogenase/reductase SDR family member 4 from Mus musculus (Mouse).